Consider the following 455-residue polypeptide: MNPVSPRSLTLIGAGLAGCLLAILLSRRGWQITVYERRGDPRIKGYECGRSINLALAERGRHALRQAGAEEVVMAKAVMMRGRMVHPLVGEPQLQRYGRDDSEVIWSIHRAALNVALLDLAEQAGARVHFYRRLHTVDFDAGYARFIDDRDDQPHEIHFQSLIGSDGAGSALRAAMQRKSPLGERTEFLDHSYKELEIPPLPGGGFRIEGNALHIWPRGRYMFIALPNDGGTFTVTLFLPNAGEPSFATTRNGDEAFALFARDFPDALPLIPQLKQHWEEHPPGLLGTLTLDRWHLDGRALLIGDAAHAMVPFHGQGMNCAFEDCVALADQLDAHDDLASAFAAFEAARRDDAGAIQQMALENYLEMRDRVDDPEFLLQRQLEQQLQARWPTRFVPHYTMVTFLRTRYSIALARSEIQREILVEATRGHSDLSRLDWAALETIVHARLEPLDGAH.

The protein belongs to the aromatic-ring hydroxylase family. KMO subfamily. FAD is required as a cofactor.

The enzyme catalyses L-kynurenine + NADPH + O2 + H(+) = 3-hydroxy-L-kynurenine + NADP(+) + H2O. The protein operates within cofactor biosynthesis; NAD(+) biosynthesis; quinolinate from L-kynurenine: step 1/3. In terms of biological role, catalyzes the hydroxylation of L-kynurenine (L-Kyn) to form 3-hydroxy-L-kynurenine (L-3OHKyn). Required for synthesis of quinolinic acid. This is Kynurenine 3-monooxygenase from Xanthomonas oryzae pv. oryzae (strain KACC10331 / KXO85).